We begin with the raw amino-acid sequence, 596 residues long: MSVKPTLSKPIGGQDASSPAVVMRRLWPYVKPLVWVLVAGVLAMAAVAATEAGIPALLKPLLDHGFGSKGDMTTKLYVPAAVVGLALARAIAQYASGYLLQYVSNRILLDLRIQMFERMIHTGVSFFQRETASTVINAVVFEVNQVLSVLMGVMITLVRDSLTVVFLLGYLFYLNWRLTLIVAILLPCIGWLVGKINRRLRRLNREHQTLTNQLAYIVEETVGGYKVVKVHNGESYEIGRFNELSRKLRGYSMRMTVSGGLAQPLTQFLASIALAVVLTIAVVQSSNDQTTVGGFVAFVTAMLLIISPLKHLMDVNQPLQRGMTAAELIFGLIDEPREPEGGGKPLARASGAIEFSHVSFSYGISRDGRQTLDDVSFTVAPGEMVALAGPSGSGKTTLVNLLPRFFDPSSGTVRVDGVALPEYSLHDLRNQIAMVSQDVVLFNDTIAANVAYGQTPERDGVEAALRAANLWETVTAMPDGIDTLVGDNGMRLSGGQRQRLAIARAIYKDAPILILDEATSALDSESERHVQAALETLMKGRTTLVIAHRLSTIERADRILVLEGGKIVESGSHRELLEQGGLYAHLHRIQFQQDAG.

Helical transmembrane passes span 34–54, 80–100, 138–158, 164–184, 263–283, and 292–312; these read VWVL…EAGI, AAVV…GYLL, AVVF…ITLV, VVFL…IVAI, QPLT…IAVV, and VGGF…LKHL. The ABC transmembrane type-1 domain maps to 38 to 321; it reads VAGVLAMAAV…LMDVNQPLQR (284 aa). An ABC transporter domain is found at 353–589; that stretch reads IEFSHVSFSY…GGLYAHLHRI (237 aa). 389 to 396 is a binding site for ATP; sequence GPSGSGKT.

Belongs to the ABC transporter superfamily. Lipid exporter (TC 3.A.1.106) family. In terms of assembly, homodimer.

Its subcellular location is the cell inner membrane. It catalyses the reaction ATP + H2O + lipid A-core oligosaccharideSide 1 = ADP + phosphate + lipid A-core oligosaccharideSide 2.. Functionally, involved in lipopolysaccharide (LPS) biosynthesis. Translocates lipid A-core from the inner to the outer leaflet of the inner membrane. Transmembrane domains (TMD) form a pore in the inner membrane and the ATP-binding domain (NBD) is responsible for energy generation. The protein is ATP-dependent lipid A-core flippase of Burkholderia thailandensis (strain ATCC 700388 / DSM 13276 / CCUG 48851 / CIP 106301 / E264).